Here is a 504-residue protein sequence, read N- to C-terminus: Anaerobic nitric oxide reductase transcription regulator NorR (504 aa).

The residue at position 57 (Asp57) is a 4-aspartylphosphate. The Sigma-54 factor interaction domain maps to 187-416 (MIGLSPGMTQ…LEHAIHRAVV (230 aa)). Residues 215 to 222 (GETGTGKE) and 278 to 287 (ADNGTLFLDE) each bind ATP. Residues 479-498 (WAACARMLETDVANLHRLAK) constitute a DNA-binding region (H-T-H motif).

Its pathway is nitrogen metabolism; nitric oxide reduction. Required for the expression of anaerobic nitric oxide (NO) reductase, acts as a transcriptional activator for at least the norVW operon. Activation also requires sigma-54. The protein is Anaerobic nitric oxide reductase transcription regulator NorR of Shigella dysenteriae serotype 1 (strain Sd197).